A 170-amino-acid chain; its full sequence is MAQIRIHEINTRIENEVEVSKFLQEEGVLYEKWNISKLPTHLKENYSLTDENKAEILAVFSKEIADVSARRGYKAHDVISLSNSTPNLDELLINFQKEHHHTDDEVRFIVSGHGIFAIEGKDGTFFDVELDPGDLISVPENARHYFTLQDDRQVVAIRIFVTTEGWVPIY.

Positions 99, 101, 105, and 144 each coordinate Fe(2+). 4 residues coordinate Ni(2+): H99, H101, E105, and H144.

This sequence belongs to the acireductone dioxygenase (ARD) family. In terms of assembly, monomer. It depends on Fe(2+) as a cofactor. The cofactor is Ni(2+).

The catalysed reaction is 1,2-dihydroxy-5-(methylsulfanyl)pent-1-en-3-one + O2 = 3-(methylsulfanyl)propanoate + CO + formate + 2 H(+). It catalyses the reaction 1,2-dihydroxy-5-(methylsulfanyl)pent-1-en-3-one + O2 = 4-methylsulfanyl-2-oxobutanoate + formate + 2 H(+). Its pathway is amino-acid biosynthesis; L-methionine biosynthesis via salvage pathway; L-methionine from S-methyl-5-thio-alpha-D-ribose 1-phosphate: step 5/6. Functionally, catalyzes 2 different reactions between oxygen and the acireductone 1,2-dihydroxy-3-keto-5-methylthiopentene (DHK-MTPene) depending upon the metal bound in the active site. Fe-containing acireductone dioxygenase (Fe-ARD) produces formate and 2-keto-4-methylthiobutyrate (KMTB), the alpha-ketoacid precursor of methionine in the methionine recycle pathway. Ni-containing acireductone dioxygenase (Ni-ARD) produces methylthiopropionate, carbon monoxide and formate, and does not lie on the methionine recycle pathway. The polypeptide is Acireductone dioxygenase (Bacillus thuringiensis subsp. konkukian (strain 97-27)).